Consider the following 162-residue polypeptide: Putative ureidoglycolate lyase (162 aa).

Belongs to the ureidoglycolate lyase family. Homodimer. The cofactor is Ni(2+).

It carries out the reaction (S)-ureidoglycolate = urea + glyoxylate. The protein operates within nitrogen metabolism; (S)-allantoin degradation. Catalyzes the catabolism of the allantoin degradation intermediate (S)-ureidoglycolate, generating urea and glyoxylate. Involved in the utilization of allantoin as nitrogen source. The polypeptide is Putative ureidoglycolate lyase (Agrobacterium fabrum (strain C58 / ATCC 33970) (Agrobacterium tumefaciens (strain C58))).